The primary structure comprises 457 residues: Multidrug resistance protein MdtK (457 aa).

Transmembrane regions (helical) follow at residues 11–31 (LLALAIPVVIAQLSQTAMGVV), 46–66 (AVAVGTSIWLPAILFGHGLLL), 93–113 (WLALCVSVLIMLVLYNSDHVI), 127–147 (AVGFLHAIMWGVPGYLFFQVL), 160–180 (GMVIGFVGLLVNIPINYIFIY), 188–208 (LGGVGCGVATASVYWVMFLMM), 243–263 (LPVALALFFEVTLFAVVALLV), 283–301 (LMFMLPMSLSVAATIRVGF), 316–336 (YTSMAVGLLLASVTAVFTIVF), 357–377 (LMLLAALYQLSDAVQVIGSGV), 387–407 (IFFITFTAYWLLGLPSGYLLG), and 418–438 (PAGFWIGFIIGLTAAAILMVL).

This sequence belongs to the multi antimicrobial extrusion (MATE) (TC 2.A.66.1) family. MdtK subfamily.

It localises to the cell inner membrane. Multidrug efflux pump that functions probably as a Na(+)/drug antiporter. In Yersinia pseudotuberculosis serotype IB (strain PB1/+), this protein is Multidrug resistance protein MdtK.